We begin with the raw amino-acid sequence, 210 residues long: Ribosomal RNA large subunit methyltransferase E (210 aa).

Residues glycine 61, tryptophan 63, aspartate 81, aspartate 97, and aspartate 122 each coordinate S-adenosyl-L-methionine. The Proton acceptor role is filled by lysine 162. Over residues 187 to 196 (KPEASRKRSP) the composition is skewed to basic and acidic residues. The disordered stretch occupies residues 187–210 (KPEASRKRSPEVYALGQGKRAHMK).

It belongs to the class I-like SAM-binding methyltransferase superfamily. RNA methyltransferase RlmE family.

The protein localises to the cytoplasm. The catalysed reaction is uridine(2552) in 23S rRNA + S-adenosyl-L-methionine = 2'-O-methyluridine(2552) in 23S rRNA + S-adenosyl-L-homocysteine + H(+). In terms of biological role, specifically methylates the uridine in position 2552 of 23S rRNA at the 2'-O position of the ribose in the fully assembled 50S ribosomal subunit. In Stenotrophomonas maltophilia (strain R551-3), this protein is Ribosomal RNA large subunit methyltransferase E.